The chain runs to 317 residues: Malate dehydrogenase (317 aa).

Residues 13 to 18 (GAGNIG) and Asp38 each bind NAD(+). Residues Arg87 and Arg93 each coordinate substrate. NAD(+) is bound by residues Asn100 and 123 to 125 (VTN). The substrate site is built by Asn125 and Arg156. His180 functions as the Proton acceptor in the catalytic mechanism.

This sequence belongs to the LDH/MDH superfamily. MDH type 3 family.

It carries out the reaction (S)-malate + NAD(+) = oxaloacetate + NADH + H(+). Catalyzes the reversible oxidation of malate to oxaloacetate. This Anaplasma marginale (strain St. Maries) protein is Malate dehydrogenase.